The following is a 407-amino-acid chain: Transcriptional regulator UL34 (407 aa).

Disordered regions lie at residues 268–330 (AAGP…EELF) and 388–407 (SPSV…PLCI). Residues 273 to 286 (EADENNDEGEEDDD) show a composition bias toward acidic residues. The segment covering 287 to 301 (ELRHSDPAPLHESKK) has biased composition (basic and acidic residues). Residues 302–312 (PRNARRPRTRV) show a composition bias toward basic residues.

Belongs to the HHV-5 UL34 protein family.

The protein localises to the host nucleus. Functionally, acts as a transcriptional repressor of the US3 gene expression through a specific DNA sequence named the transcriptional repressive element (tre). The sequence is that of Transcriptional regulator UL34 (UL34) from Human cytomegalovirus (strain Towne) (HHV-5).